Here is a 215-residue protein sequence, read N- to C-terminus: MAKRSIFRFADEKGLKVAARYGVLMSTSFIFALLFHSSVADVNTLWSPGPESAFDAAETYYTLVAGSHFIVKYTVYTIMGLNMIFHLIQATGAKGDDKLFFYSSTLLYLTALILFIVNVAPSMLVVKLQNYVQFPRNMHLSVLAASHVLVEFLLAGVILIQLGYVFGYHVQSIQQREYAEDMREQELAEKAKLESESATTQSVETVSTESVSKRK.

The Cytoplasmic portion of the chain corresponds to 1–21 (MAKRSIFRFADEKGLKVAARY). Residues 22-42 (GVLMSTSFIFALLFHSSVADV) traverse the membrane as a helical segment. The Extracellular segment spans residues 43-67 (NTLWSPGPESAFDAAETYYTLVAGS). Residues 68–88 (HFIVKYTVYTIMGLNMIFHLI) form a helical membrane-spanning segment. Topologically, residues 89-105 (QATGAKGDDKLFFYSST) are cytoplasmic. A helical transmembrane segment spans residues 106 to 126 (LLYLTALILFIVNVAPSMLVV). Over 127–147 (KLQNYVQFPRNMHLSVLAASH) the chain is Extracellular. The helical transmembrane segment at 148–168 (VLVEFLLAGVILIQLGYVFGY) threads the bilayer. Residues 169–215 (HVQSIQQREYAEDMREQELAEKAKLESESATTQSVETVSTESVSKRK) are Cytoplasmic-facing. The tract at residues 190–215 (KAKLESESATTQSVETVSTESVSKRK) is disordered. The segment covering 196–215 (ESATTQSVETVSTESVSKRK) has biased composition (low complexity).

This sequence to yeast SHR3. As to quaternary structure, monomer.

The protein resides in the endoplasmic reticulum membrane. Its function is as follows. Involved in amino acid permease processing and required for the efficient translocation of structurally related amino acid permeases from the endoplasmic reticulum to the plasma membrane. This is Secretory component protein psh3 (psh3) from Schizosaccharomyces pombe (strain 972 / ATCC 24843) (Fission yeast).